Here is a 233-residue protein sequence, read N- to C-terminus: MGQKVHPNGIRLGIVKPWNSTWFANTKEFADNLDSDFKVRQYLNKELAKASVSRIVIERPAKSIRVTIHTARPGIVIGKKGEDVEKLRKGVADIAGVPAQINIAEVRKPELDAKLVADSITSQLERRVMFRRAMKRAVQNAMRLGAKGIKVEVSGRLGGAEIARTEWYREGRVPLHTLRADIDYNTSEAHTTYGVIGVKVWIFKGEILGGMAAVEQPEKPAAQPKKQQRKGRK.

The region spanning 39-107 is the KH type-2 domain; sequence VRQYLNKELA…PAQINIAEVR (69 aa).

This sequence belongs to the universal ribosomal protein uS3 family. As to quaternary structure, part of the 30S ribosomal subunit. Forms a tight complex with proteins S10 and S14.

In terms of biological role, binds the lower part of the 30S subunit head. Binds mRNA in the 70S ribosome, positioning it for translation. This is Small ribosomal subunit protein uS3 from Cronobacter sakazakii (strain ATCC BAA-894) (Enterobacter sakazakii).